We begin with the raw amino-acid sequence, 373 residues long: Zn(2)-C6 fungal-type transcription factor afumD (373 aa).

Residues 1-48 form a disordered region; sequence MLDRSKMTSAIPDSNSSSSPRGHNQSERDSYNRKKRKGPRLAHRKSRT. Positions 33 to 48 are enriched in basic residues; it reads RKKRKGPRLAHRKSRT. Residues 50–77 constitute a DNA-binding region (zn(2)-C6 fungal-type); it reads CQRCRARRVKCDESRPVCRDCHRHGIPC. The tract at residues 86–110 is disordered; sequence GAIPPSTGIQSRPLEPSPSDPSNDA.

The protein localises to the nucleus. Functionally, zn(2)-C6 fungal-type transcription factor; part of the gene cluster that mediates the biosynthesis fumihopaside A, a hopane-type glucoside that enhances the thermotolerance and UV resistance of N.fumigata. This Aspergillus fumigatus (strain CBS 144.89 / FGSC A1163 / CEA10) (Neosartorya fumigata) protein is Zn(2)-C6 fungal-type transcription factor afumD.